Reading from the N-terminus, the 874-residue chain is Mannuronan C5-epimerase AlgE6 (874 aa).

8 PbH1 repeats span residues 133 to 155, 157 to 179, 180 to 202, 204 to 226, 234 to 256, 257 to 279, 280 to 302, and 320 to 351; these read DRNV…DPHE, TINL…VADY, QIGG…NIVT, TNDF…VVQR, PENI…LVKM, SNNV…RVYG, AQGV…APEV, and TLNT…DFSS. Hemolysin-type calcium-binding repeat units follow at residues 383–394, 401–417, 419–435, 562–578, 580–596, 723–739, and 741–757; these read GTDGNDVLIGSD, GGAG…DDLL, GGAG…ADTF, GGGG…GDLL, and GGGG…NDLL. Positions 401-420 are disordered; the sequence is GGAGDDRLDGGAGDDLLDGG.

The protein belongs to the D-mannuronate C5-epimerase family. Requires Ca(2+) as cofactor.

Its subcellular location is the secreted. The catalysed reaction is [(1-&gt;4)-beta-D-mannuronosyl](n) = [alginate](n). It participates in glycan biosynthesis; alginate biosynthesis. Its activity is regulated as follows. Inhibited by zinc. Functionally, converts beta-D-mannuronic acid (M) to alpha-L-guluronic acid (G), producing a polymer with gel-forming capacity, required for the formation of the cyst coat. The protein is Mannuronan C5-epimerase AlgE6 of Azotobacter vinelandii.